Consider the following 379-residue polypeptide: Acyl-CoA dehydrogenase, short-chain specific (379 aa).

The protein belongs to the acyl-CoA dehydrogenase family. FAD is required as a cofactor.

It catalyses the reaction butanoyl-CoA + oxidized [electron-transfer flavoprotein] + H(+) = (2E)-butenoyl-CoA + reduced [electron-transfer flavoprotein]. The catalysed reaction is a short-chain 2,3-saturated fatty acyl-CoA + oxidized [electron-transfer flavoprotein] + H(+) = a short-chain (2E)-enoyl-CoA + reduced [electron-transfer flavoprotein]. The protein operates within lipid metabolism; butanoate metabolism. This is Acyl-CoA dehydrogenase, short-chain specific (bcd) from Clostridium acetobutylicum (strain ATCC 824 / DSM 792 / JCM 1419 / IAM 19013 / LMG 5710 / NBRC 13948 / NRRL B-527 / VKM B-1787 / 2291 / W).